We begin with the raw amino-acid sequence, 631 residues long: PTS system glucosamine-specific EIICBA component (631 aa).

A PTS EIIC type-1 domain is found at 3–382 (KKAFQILQQL…WNLKTPGRET (380 aa)). The next 8 helical transmembrane spans lie at 12-32 (LGRA…LLRF), 56-76 (LIFA…AGLA), 106-126 (HLID…AYLY), 149-169 (IITS…WPLI), 196-216 (LLIP…MMGE), 243-263 (FMMG…LAII), 298-318 (FLFV…VIFV), and 350-370 (VVIP…RFAI). The PTS EIIB type-1 domain occupies 397–478 (DQLAFHVLQA…KTIMAGGVPA (82 aa)). The active-site Phosphocysteine intermediate; for EIIB activity is C419. C419 bears the Phosphocysteine mark. Positions 515-619 (DQVFSEKMMG…SAITPVIFTN (105 aa)) constitute a PTS EIIA type-1 domain. H567 serves as the catalytic Tele-phosphohistidine intermediate; for EIIA activity. H567 is modified (phosphohistidine).

It localises to the cell membrane. It catalyses the reaction D-glucosamine(out) + N(pros)-phospho-L-histidyl-[protein] = D-glucosamine 6-phosphate(in) + L-histidyl-[protein]. Functionally, the phosphoenolpyruvate-dependent sugar phosphotransferase system (sugar PTS), a major carbohydrate active transport system, catalyzes the phosphorylation of incoming sugar substrates concomitantly with their translocation across the cell membrane. This system is involved in glucosamine transport. In vitro, when expressed in the absence of GamR and NagP, can transport N-acetylglucosamine. Its function is as follows. In addition, plays an important role in the phosphorylation of EIIA-deficient PTS transporters. The EIIA domain can transfer a phosphoryl group to EIIA-deficient PTS transporters, enabling growth with maltose, N-acetylglucosamine, sucrose or trehalose as the sole carbon source. The sequence is that of PTS system glucosamine-specific EIICBA component from Bacillus subtilis (strain 168).